The following is a 119-amino-acid chain: Protein FATTY ACID EXPORT 6 (119 aa).

Helical transmembrane passes span 27–47 (SITS…AGYI), 57–77 (NSTI…LVMG), and 84–104 (GKIM…CFYV).

Belongs to the TMEM14 family.

The protein resides in the membrane. Its function is as follows. May be involved in free fatty acids export. The sequence is that of Protein FATTY ACID EXPORT 6 from Arabidopsis thaliana (Mouse-ear cress).